A 239-amino-acid chain; its full sequence is Phosphothreonine lyase OspF (239 aa).

The active-site Proton donor is His104. The active-site Proton acceptor is the Lys134.

This sequence belongs to the phosphothreonine lyase family.

It is found in the secreted. In terms of biological role, catalyzes the removal of the phosphate group from the phosphothreonine in the mitogen-activated protein kinases p38, phosphothreonine in the mitogen-activated protein kinases such as MAPK2/ERK2, MAPK3/ERK1, MAPK8 and MAPK14 in an irreversible reaction, thus preventing the downstream phosphorylation of histone H3. This epigenetic modification results in inhibition of the transcription of a specific subset of pro-inflammatory genes, and ultimately to a reduced immune response against the invading pathogen. The diminished immune response enhances the bacterium's ability to disseminate and multiply within the host. The chain is Phosphothreonine lyase OspF (ospF) from Shigella boydii serotype 4 (strain Sb227).